Here is a 751-residue protein sequence, read N- to C-terminus: 1,3-beta-galactosyl-N-acetylhexosamine phosphorylase (751 aa).

Catalysis depends on D313, which acts as the Proton donor.

Belongs to the glycoside hydrolase 112 family. Homodimer.

It catalyses the reaction beta-D-galactosyl-(1-&gt;3)-N-acetyl-D-glucosamine + phosphate = alpha-D-galactose 1-phosphate + N-acetyl-D-glucosamine. Its function is as follows. Reversibly phosphorolyzes lacto-N-biose to Gal1-P and N-acetylglucosamine (GlcNAc) and galacto-N-biose to Gal1-P and N-acetylgalactosamine (GalNAc). Involved in the lacto-N-biose I/galacto-N-biose (LNB/GNB) degradation pathway, which is important for host intestinal colonization by bifidobacteria. The chain is 1,3-beta-galactosyl-N-acetylhexosamine phosphorylase (lnpA) from Bifidobacterium longum subsp. longum (strain ATCC 15707 / DSM 20219 / JCM 1217 / NCTC 11818 / E194b).